Consider the following 455-residue polypeptide: Protein 60A (455 aa).

The signal sequence occupies residues 1-36; it reads MSGLRNTSEAVAVLASLGLGMVLLMFVATTPPAVEA. Positions 37-335 are excised as a propeptide; that stretch reads TQSGIYIDNG…SASHPRKRKK (299 aa). Residues 108–118 show a composition bias toward acidic residues; it reads GLSDQDEDDDY. The segment at 108–138 is disordered; the sequence is GLSDQDEDDDYERGHRSRRSADLEEDEGEQQ. Asn-238 and Asn-250 each carry an N-linked (GlcNAc...) asparagine glycan. Residues 316–345 form a disordered region; that stretch reads AHSSHHRSKRSASHPRKRKKSVSPNNVPLL. The span at 318 to 336 shows a compositional bias: basic residues; the sequence is SSHHRSKRSASHPRKRKKS. 3 disulfides stabilise this stretch: Cys-354–Cys-420, Cys-383–Cys-452, and Cys-387–Cys-454. An N-linked (GlcNAc...) asparagine glycan is attached at Asn-396.

Belongs to the TGF-beta family. In terms of assembly, homodimer; disulfide-linked. Interacts with nord and dpp. Expressed in cells of the developing foregut and hindgut during germ band retraction and later embryonic stages. Expressed in the wing disk, mainly in the posterior compartment in the pteropleural and medial regions extending into the progenitors of the scutellum. High levels are found within the posterior and anterior compartments of the wing pouch and low levels in the hinge region. In the eye/antennal disk, expression is highest anterior to the morphogenetic furrow and in the medial regions with lower levels of expression posterior to the morphogenetic furrow. Expressed throughout the posterior compartment of the leg imaginal disks and within the ventral anterior compartment.

It localises to the secreted. Functionally, required for the growth of imaginal tissues and for patterning of the adult wing. The protein is Protein 60A (gbb) of Drosophila melanogaster (Fruit fly).